The sequence spans 355 residues: UDP-3-O-acylglucosamine N-acyltransferase (355 aa).

His252 serves as the catalytic Proton acceptor.

The protein belongs to the transferase hexapeptide repeat family. LpxD subfamily. Homotrimer.

It carries out the reaction a UDP-3-O-[(3R)-3-hydroxyacyl]-alpha-D-glucosamine + a (3R)-hydroxyacyl-[ACP] = a UDP-2-N,3-O-bis[(3R)-3-hydroxyacyl]-alpha-D-glucosamine + holo-[ACP] + H(+). Its pathway is bacterial outer membrane biogenesis; LPS lipid A biosynthesis. In terms of biological role, catalyzes the N-acylation of UDP-3-O-acylglucosamine using 3-hydroxyacyl-ACP as the acyl donor. Is involved in the biosynthesis of lipid A, a phosphorylated glycolipid that anchors the lipopolysaccharide to the outer membrane of the cell. The protein is UDP-3-O-acylglucosamine N-acyltransferase of Polynucleobacter asymbioticus (strain DSM 18221 / CIP 109841 / QLW-P1DMWA-1) (Polynucleobacter necessarius subsp. asymbioticus).